We begin with the raw amino-acid sequence, 78 residues long: Nucleocapsid VP1 (78 aa).

In terms of assembly, homodimer.

Its subcellular location is the virion. Completely wraps the viral circular dsDNA genome to form a nucleoprotein filament. These interactions between the viral genome and the nucleocapsid proteins probably maintain the DNA in A-form. This certainly protects the viral DNA under conditions such as the extreme desiccation of its host. The protein is Nucleocapsid VP1 of Sulfolobus (SPV1).